We begin with the raw amino-acid sequence, 212 residues long: Large ribosomal subunit protein uL1 (212 aa).

It belongs to the universal ribosomal protein uL1 family. Part of the 50S ribosomal subunit.

Its function is as follows. Binds directly to 23S rRNA. Probably involved in E site tRNA release. Functionally, protein L1 is also a translational repressor protein, it controls the translation of its operon by binding to its mRNA. In Haloquadratum walsbyi (strain DSM 16790 / HBSQ001), this protein is Large ribosomal subunit protein uL1.